Here is a 323-residue protein sequence, read N- to C-terminus: Putative gluconeogenesis factor (323 aa).

Belongs to the gluconeogenesis factor family.

It localises to the cytoplasm. Its function is as follows. Required for morphogenesis under gluconeogenic growth conditions. This Thermoanaerobacterium thermosulfurigenes (Clostridium thermosulfurogenes) protein is Putative gluconeogenesis factor.